We begin with the raw amino-acid sequence, 456 residues long: Enolase (456 aa).

Gln-177 lines the (2R)-2-phosphoglycerate pocket. The Proton donor role is filled by Glu-219. Positions 256, 310, and 337 each coordinate Mg(2+). 4 residues coordinate (2R)-2-phosphoglycerate: Lys-362, Arg-391, Ser-392, and Lys-413. Lys-362 acts as the Proton acceptor in catalysis.

It belongs to the enolase family. As to quaternary structure, homodimer. Mg(2+) serves as cofactor.

It localises to the cytoplasm. The protein resides in the secreted. Its subcellular location is the cell surface. The catalysed reaction is (2R)-2-phosphoglycerate = phosphoenolpyruvate + H2O. The protein operates within carbohydrate degradation; glycolysis; pyruvate from D-glyceraldehyde 3-phosphate: step 4/5. Its function is as follows. Catalyzes the reversible conversion of 2-phosphoglycerate (2-PG) into phosphoenolpyruvate (PEP). It is essential for the degradation of carbohydrates via glycolysis. 'Moonlights' as a plasminogen receptor. Binds plasminogen, but no fibronectin binding was observed. Plasminogen binding increases bacterial adherence to host cells; plasmin activity leads to degradation of host extracellular matrix proteins, facilitating bacterial dissemination and disease spread. This Mycoplasma pneumoniae (strain ATCC 29342 / M129 / Subtype 1) (Mycoplasmoides pneumoniae) protein is Enolase.